Reading from the N-terminus, the 297-residue chain is Homoserine kinase (297 aa).

Position 79–89 (79–89) interacts with ATP; sequence PIARGLGSSGA.

This sequence belongs to the GHMP kinase family. Homoserine kinase subfamily.

Its subcellular location is the cytoplasm. The enzyme catalyses L-homoserine + ATP = O-phospho-L-homoserine + ADP + H(+). It participates in amino-acid biosynthesis; L-threonine biosynthesis; L-threonine from L-aspartate: step 4/5. Functionally, catalyzes the ATP-dependent phosphorylation of L-homoserine to L-homoserine phosphate. The chain is Homoserine kinase from Pyrobaculum neutrophilum (strain DSM 2338 / JCM 9278 / NBRC 100436 / V24Sta) (Thermoproteus neutrophilus).